The following is a 343-amino-acid chain: MAGNCSWEAHSTNQNKMCPGMSEARELYSRGFLTIEQIATLPPPAVTNYIFLLLCLCGLVGNGLVLWFFGFSIKRTPFSIYFLHLASADGMYLFSKAVIALLNMGTFLGSFPDYIRRVSRIVGLCTFFTGVSLLPAISIERCVSVIFPTWYWRRRPKRLSAGVCALLWMLSFLVTSIHNYFCMFLGHEAPGTVCRNMDIALGILLFFLFCPLMVLPCLALILHVECRARRRQRSAKLNHVVLAIVSVFLVSSIYLGIDWFLFWVFQIPAPFPEYVTDLCICINSSAKPIVYFLAGRDKSQRLWEPLRVVFQRALRDGAEPGDAASSTPNTVTMEMQCPSGNAS.

The Extracellular segment spans residues 1–44; sequence MAGNCSWEAHSTNQNKMCPGMSEARELYSRGFLTIEQIATLPPP. The N-linked (GlcNAc...) asparagine glycan is linked to Asn-4. A helical transmembrane segment spans residues 45-66; it reads AVTNYIFLLLCLCGLVGNGLVL. Over 67-82 the chain is Cytoplasmic; sequence WFFGFSIKRTPFSIYF. The helical transmembrane segment at 83 to 104 threads the bilayer; the sequence is LHLASADGMYLFSKAVIALLNM. Over 105-123 the chain is Extracellular; the sequence is GTFLGSFPDYIRRVSRIVG. The chain crosses the membrane as a helical span at residues 124 to 144; the sequence is LCTFFTGVSLLPAISIERCVS. Topologically, residues 145–160 are cytoplasmic; that stretch reads VIFPTWYWRRRPKRLS. The helical transmembrane segment at 161 to 181 threads the bilayer; it reads AGVCALLWMLSFLVTSIHNYF. Over 182-198 the chain is Extracellular; that stretch reads CMFLGHEAPGTVCRNMD. The helical transmembrane segment at 199–220 threads the bilayer; sequence IALGILLFFLFCPLMVLPCLAL. Residues 221–241 lie on the Cytoplasmic side of the membrane; the sequence is ILHVECRARRRQRSAKLNHVV. A helical membrane pass occupies residues 242–263; sequence LAIVSVFLVSSIYLGIDWFLFW. Residues 264 to 273 are Extracellular-facing; the sequence is VFQIPAPFPE. The helical transmembrane segment at 274–294 threads the bilayer; it reads YVTDLCICINSSAKPIVYFLA. Residues 295-343 are Cytoplasmic-facing; sequence GRDKSQRLWEPLRVVFQRALRDGAEPGDAASSTPNTVTMEMQCPSGNAS. A disordered region spans residues 318 to 343; that stretch reads AEPGDAASSTPNTVTMEMQCPSGNAS. A compositionally biased stretch (polar residues) spans 324–343; that stretch reads ASSTPNTVTMEMQCPSGNAS.

It belongs to the G-protein coupled receptor 1 family. Mas subfamily.

The protein localises to the cell membrane. In terms of biological role, orphan receptor. May bind to a neuropeptide and may regulate nociceptor function and/or development, including the sensation or modulation of pain. The chain is Mas-related G-protein coupled receptor member F (Mrgprf) from Mus musculus (Mouse).